The primary structure comprises 296 residues: GTP-binding protein GEM (296 aa).

Disordered regions lie at residues methionine 1–glutamine 20 and proline 37–serine 68. Positions serine 57–serine 68 are enriched in low complexity. GTP contacts are provided by residues glycine 82 to serine 89 and asparagine 191 to aspartate 194. A calmodulin-binding region spans residues alanine 266–leucine 285.

Belongs to the small GTPase superfamily. RGK family. Interacts with calmodulin in a Ca(2+)-dependent manner. Binds ROCK1. Post-translationally, phosphorylated on tyrosine residues.

The protein resides in the cell membrane. Could be a regulatory protein, possibly participating in receptor-mediated signal transduction at the plasma membrane. Has guanine nucleotide-binding activity but undetectable intrinsic GTPase activity. The chain is GTP-binding protein GEM (GEM) from Pongo abelii (Sumatran orangutan).